A 4085-amino-acid chain; its full sequence is MACNRVTLAVASDSEISANGCSTIAQAVRRYSEAASNGFRACRFVSLDLQDCIVGIADDTYVMGLHGNQTLFCNIMKFSDRPFMLHGWLVFSNSNYLLEEFDVVFGKRGGGNVTYTDQYLCGADGKPVMSEDLWQFVDHFGENEEIIINGHTYVCAWLTKRKPLDYKRQNNLAIEEIEYVHGDALHTLRNGSVLEMAKEVKTSSKVVLSDALDKLYKVFGSPVMTNGSNILEAFTKPVFISALVQCTCGTKSWSVGDWTGFKSSCCNVISNKLCVVPGNVKPGDAVITTQQAGAGIKYFCGMTLKFVANIEGVSVWRVIALQSVDCFVASSTFVEEEHVNRMDTFCFNVRNSVTDECRLAMLGAEMTSNVRRQVASGVIDISTGWFDVYDDIFAESKPWFVRKAEDIFGPCWSALASALKQLKVTTGELVRFVKSICNSAVAVVGGTIQILASVPEKFLNAFDVFVTAIQTVFDCAVETCTIAGKAFDKVFDYVLLDNALVKLVTTKLKGVRERGLNKVKYATVVVGSTEEVKSSRVERSTAVLTIANNYSKLFDEGYTVVIGDVAYFVSDGYFRLMASPNSVLTTAVYKPLFAFNVNVMGTRPEKFPTTVTCENLESAVLFVNDKITEFQLDYSIDVIDNEIIVKPNISLCVPLYVRDYVDKWDDFCRQYSNESWFEDDYRAFISVLDITDAAVKAAESKAFVDTIVPPCPSILKVIDGGKIWNGVIKNVNSVRDWLKSLKLNLTQQGLLGTCAKRFKRWLGILLEAYNAFLDTVVSTVKIGGLTFKTYAFDKPYIVIRDIVCKVENKTEAEWIELFPHNDRIKSFSTFESAYMPIADPTHFDIEEVELLDAEFVEPGCGGILAVIDEHVFYKKDGVYYPSNGTNILPVAFTKAAGGKVSFSDDVEVKDIEPVYRVKLCFEFEDEKLVDVCEKAIGKKIKHEGDWDSFCKTIQSALSVVSCYVNLPTYYIYDEEGGNDLSLPVMISEWPLSVQQAQQEATLPDIAEDVVDQVEEVNSIFDIETVDVKHDVSPFEMPFEELNGLKILKQLDNNCWVNSVMLQIQLTGILDGDYAMQFFKMGRVAKMIERCYTAEQCIRGAMGDVGLCMYRLLKDLHTGFMVMDYKCSCTSGRLEESGAVLFCTPTKKAFPYGTCLNCNAPRMCTIRQLQGTIIFVQQKPEPVNPVSFVVKPVCSSIFRGAVSCGHYQTNIYSQNLCVDGFGVNKIQPWTNDALNTICIKDADYNAKVEISVTPIKNTVDTTPKEEFVVKEKLNAFLVHDNVAFYQGDVDTVVNGVDFDFIVNAANENLAHGGGLAKALDVYTKGKLQRLSKEHIGLAGKVKVGTGVMVECDSLRIFNVVGPRKGKHERDLLIKAYNTINNEQGTPLTPILSCGIFGIKLETSLEVLLDVCNTKEVKVFVYTDTEVCKVKDFVSGLVNVQKVEQPKIEPKPVSVIKVAPKPYRVDGKFSYFTEDLLCVADDKPIVLFTDSMLTLDDRGLALDNALSGVLSAAIKDCVDINKAIPSGNLIKFDIGSVVVYMCVVPSEKDKHLDNNVQRCTRKLNRLMCDIVCTIPADYILPLVLSSLTCNVSFVGELKAAEAKVITIKVTEDGVNVHDVTVTTDKSFEQQVGVIADKDKDLSGAVPSDLNTSELLTKAIDVDWVEFYGFKDAVTFATVDHSAFAYESAVVNGIRVLKTSDNNCWVNAVCIALQYSKPHFISQGLDAAWNKFVLGDVEIFVAFVYYVARLMKGDKGDAEDTLTKLSKYLANEAQVQLEHYSSCVECDAKFKNSVASINSAIVCASVKRDGVQVGYCVHGIKYYSRVRSVRGRAIIVSVEQLEPCAQSRLLSGVAYTAFSGPVDKGHYTVYDTAKKSMYDGDRFVKHDLSLLSVTSVVMVGGYVAPVNTVKPKPVINQLDEKAQKFFDFGDFLIHNFVIFFTWLLSMFTLCKTAVTTGDVKIMAKAPQRTGVVLKRSLKYNLKASAAVLKSKWWLLAKFTKLLLLIYTLYSVVLLCVRFGPFNFCSETVNGYAKSNFVKDDYCDGSLGCKMCLFGYQELSQFSHLDVVWKHITDPLFSNMQPFIVMVLLLIFGDNYLRCFLLYFVAQMISTVGVFLGYKETNWFLHFIPFDVICDELLVTVIVIKVISFVRHVLFGCENPDCIACSKSARLKRFPVNTIVNGVQRSFYVNANGGSKFCKKHRFFCVDCDSYGYGSTFITPEVSRELGNITKTNVQPTGPAYVMIDKVEFENGFYRLYSCETFWRYNFDITESKYSCKEVFKNCNVLDDFIVFNNNGTNVTQVKNASVYFSQLLCRPIKLVDSELLSTLSVDFNGVLHKAYIDVLRNSFGKDLNANMSLAECKRALGLSISDHEFTSAISNAHRCDVLLSDLSFNNFVSSYAKPEEKLSAYDLACCMRAGAKVVNANVLTKDQTPIVWHAKDFNSLSAEGRKYIVKTSKAKGLTFLLTINENQAVTQIPATSIVAKQGAGDAGHSLTWLWLLCGLVCLIQFYLCFFMPYFMYDIVSSFEGYDFKYIENGQLKNFEAPLKCVRNVFENFEDWHYAKFGFTPLNKQSCPIVVGVSEIVNTVAGIPSNVYLVGKTLIFTLQAAFGNAGVCYDIFGVTTPEKCIFTSACTRLEGLGGNNVYCYNTALMEGSLPYSSIQANAYYKYDNGNFIKLPEVIAQGFGFRTVRTIATKYCRVGECVESNAGVCFGFDKWFVNDGRVANGYVCGTGLWNLVFNILSMFSSSFSVAAMSGQILLNCALGAFAIFCCFLVTKFRRMFGDLSVGVCTVVVAVLLNNVSYIVTQNLVTMIAYAILYFFATRSLRYAWIWCAAYLIAYISFAPWWLCAWYFLAMLTGLLPSLLKLKVSTNLFEGDKFVGTFESAAAGTFVIDMRSYEKLANSISPEKLKSYAASYNRYKYYSGNANEADYRCACYAYLAKAMLDFSRDHNDILYTPPTVSYGSTLQAGLRKMAQPSGFVEKCVVRVCYGNTVLNGLWLGDIVYCPRHVIASNTTSAIDYDHEYSIMRLHNFSIISGTAFLGVVGATMHGVTLKIKVSQTNMHTPRHSFRTLKSGEGFNILACYDGCAQGVFGVNMRTNWTIRGSFINGACGSPGYNLKNGEVEFVYMHQIELGSGSHVGSSFDGVMYGGFEDQPNLQVESANQMLTVNVVAFLYAAILNGCTWWLKGEKLFVEHYNEWAQANGFTAMNGEDAFSILAAKTGVCVERLLHAIQVLNNGFGGKQILGYSSLNDEFSINEVVKQMFGVNLQSGKTTSMFKSISLFAGFFVMFWAELFVYTTTIWVNPGFLTPFMILLVALSLCLTFVVKHKVLFLQVFLLPSIIVAAIQNCAWDYHVTKVLAEKFDYNVSVMQMDIQGFVNIFICLFVALLHTWRFAKERCTHWCTYLFSLIAVLYTALYSYDYVSLLVMLLCAISNEWYIGAIIFRICRFGVAFLPVEYVSYFDGVKTVLLFYMLLGFVSCMYYGLLYWINRFCKCTLGVYDFCVSPAEFKYMVANGLNAPNGPFDALFLSFKLMGIGGPRTIKVSTVQSKLTDLKCTNVVLMGILSNMNIASNSKEWAYCVEMHNKINLCDDPETAQELLLALLAFFLSKHSDFGLGDLVDSYFENDSILQSVASSFVGMPSFVAYETARQEYENAVANGSSPQIIKQLKKAMNVAKAEFDRESSVQKKINRMAEQAAAAMYKEARAVNRKSKVVSAMHSLLFGMLRRLDMSSVDTILNMARNGVVPLSVIPATSAARLVVVVPDHDSFVKMMVDGFVHYAGVVWTLQEVKDNDGKNVHLKDVTKENQEILVWPLILTCERVVKLQNNEIMPGKMKVKATKGEGDGGITSEGNALYNNEGGRAFMYAYVTTKPGMKYVKWEHDSGVVTVELEPPCRFVIDTPTGPQIKYLYFVKNLNNLRRGAVLGYIGATVRLQAGKQTEFVSNSHLLTHCSFAVDPAAAYLDAVKQGAKPVGNCVKMLTNGSGSGQAITCTIDSNTTQDTYGGASVCIYCRAHVAHPTMDGFCQYKGKWVQVPIGTNDPIRFCLENTVCKVCGCWLNHGCTCDRTAIQSFDNSYLNESGALVPLD.

Residues 2–109 form the CoV Nsp1 globular domain; that stretch reads ACNRVTLAVA…EFDVVFGKRG (108 aa). The CoV Nsp2 N-terminal domain maps to 113-359; that stretch reads VTYTDQYLCG…RNSVTDECRL (247 aa). The Zn(2+) site is built by C246, C248, C265, and C266. Positions 246-266 are C4; that stretch reads CTCGTKSWSVGDWTGFKSSCC. Positions 389 to 775 constitute a CoV Nsp2 middle domain; that stretch reads YDDIFAESKP…LEAYNAFLDT (387 aa). The region spanning 773–897 is the CoV Nsp2 C-terminal domain; that stretch reads LDTVVSTVKI…LPVAFTKAAG (125 aa). The region spanning 898 to 993 is the Ubiquitin-like 1 domain; sequence GKVSFSDDVE…VMISEWPLSV (96 aa). Positions 1016 to 1268 constitute a Peptidase C16 1 domain; the sequence is VNSIFDIETV…DTTPKEEFVV (253 aa). C1054 serves as the catalytic For PL1-PRO activity. The segment at 1126–1157 adopts a C4-type 1; degenerate zinc-finger fold; the sequence is CSCTSGRLEESGAVLFCTPTKKAFPYGTCLNC. Active-site for PL1-PRO activity residues include H1205 and D1218. The 168-residue stretch at 1269–1436 folds into the Macro domain; it reads KEKLNAFLVH…KVKDFVSGLV (168 aa). The Ubiquitin-like 2 domain maps to 1600–1655; it reads AKVITIKVTEDGVNVHDVTVTTDKSFEQQVGVIADKDKDLSGAVPSDLNTSELLTK. A Peptidase C16 2 domain is found at 1663 to 1914; the sequence is EFYGFKDAVT…TVKPKPVINQ (252 aa). Catalysis depends on C1701, which acts as the For PL2-PRO activity. Zn(2+) is bound by residues C1780, C1783, C1813, and H1815. The C4-type 2; atypical zinc-finger motif lies at 1780–1815; the sequence is CVECDAKFKNSVASINSAIVCASVKRDGVQVGYCVH. Catalysis depends on for PL2-PRO activity residues H1863 and D1868. Residues 1925–2115 are HD1; it reads FGDFLIHNFV…STVGVFLGYK (191 aa). The helical transmembrane segment at 1998 to 2018 threads the bilayer; that stretch reads LLLLIYTLYSVVLLCVRFGPF. Residues 2005–2070 enclose the 3Ecto domain; sequence LYSVVLLCVR…LDVVWKHITD (66 aa). Disulfide bonds link C2021/C2048 and C2039/C2045. 2 helical membrane passes run 2068-2088 and 2095-2115; these read ITDP…LLIF and CFLL…LGYK. Residues 2144-2234 form a Y1 region; that stretch reads SFVRHVLFGC…ITKTNVQPTG (91 aa). The 340-residue stretch at 2144–2483 folds into the CoV Nsp3 Y domain; that stretch reads SFVRHVLFGC…PATSIVAKQG (340 aa). H2148, C2153, C2158, C2161, C2194, H2197, C2201, and C2204 together coordinate Zn(2+). A ZF1 region spans residues 2148-2161; the sequence is HVLFGCENPDCIAC. Positions 2194-2204 are ZF2; that stretch reads CKKHRFFCVDC. Residues 2235-2324 form a Y2 region; sequence PAYVMIDKVE…LVDSELLSTL (90 aa). Residues 2235-2483 form a coV-Y region; that stretch reads PAYVMIDKVE…PATSIVAKQG (249 aa). The Y3 stretch occupies residues 2325-2381; sequence SVDFNGVLHKAYIDVLRNSFGKDLNANMSLAECKRALGLSISDHEFTSAISNAHRCD. The tract at residues 2382–2483 is Y4; the sequence is VLLSDLSFNN…PATSIVAKQG (102 aa). 6 helical membrane-spanning segments follow: residues 2491–2511, 2731–2751, 2755–2775, 2782–2802, 2809–2829, and 2834–2854; these read LTWL…LCFF, LWNL…VAAM, ILLN…VTKF, LSVG…SYIV, MIAY…AWIW, and LIAY…LAML. The HD2 stretch occupies residues 2491 to 2854; it reads LTWLWLLCGL…LCAWYFLAML (364 aa). The 96-residue stretch at 2870–2965 folds into the Nsp4C domain; that stretch reads LFEGDKFVGT…PTVSYGSTLQ (96 aa). In terms of domain architecture, Peptidase C30 spans 2966 to 3267; that stretch reads AGLRKMAQPS…VKQMFGVNLQ (302 aa). Active-site for 3CL-PRO activity residues include H3006 and C3109. A run of 7 helical transmembrane segments spans residues 3281–3301, 3304–3324, 3328–3348, 3367–3387, 3401–3421, 3422–3442, and 3467–3487; these read FAGF…TIWV, GFLT…TFVV, VLFL…QNCA, VMQM…VALL, CTYL…YDYV, SLLV…AIIF, and LLFY…LYWI. An HD3 region spans residues 3281–3487; the sequence is FAGFFVMFWA…CMYYGLLYWI (207 aa). In terms of domain architecture, RdRp Nsp7 cofactor spans 3547-3629; it reads SKLTDLKCTN…SYFENDSILQ (83 aa). Positions 3630-3824 constitute a RdRp Nsp8 cofactor domain; the sequence is SVASSFVGMP…LTCERVVKLQ (195 aa). The Nsp9 ssRNA-binding domain occupies 3825–3933; that stretch reads NNEIMPGKMK…GYIGATVRLQ (109 aa). The 139-residue stretch at 3934–4072 folds into the ExoN/MTase coactivator domain; it reads AGKQTEFVSN…DRTAIQSFDN (139 aa). The Zn(2+) site is built by C4007, C4010, H4016, C4023, C4049, C4052, C4060, and C4062. Zinc fingers lie at residues 4007 to 4023 and 4049 to 4062; these read CIYC…DGFC and CKVC…GCTC.

This sequence belongs to the coronaviruses polyprotein 1ab family. 3CL-PRO exists as monomer and homodimer. Eight copies of nsp7 and eight copies of nsp8 assemble to form a heterohexadecamer. Nsp9 is a dimer. Nsp10 forms a dodecamer. Post-translationally, specific enzymatic cleavages in vivo by its own proteases yield mature proteins. 3CL-PRO and PL-PRO proteinases are autocatalytically processed.

It localises to the host membrane. It is found in the host cytoplasm. The protein localises to the host perinuclear region. It catalyses the reaction Thiol-dependent hydrolysis of ester, thioester, amide, peptide and isopeptide bonds formed by the C-terminal Gly of ubiquitin (a 76-residue protein attached to proteins as an intracellular targeting signal).. The papain-like proteinase 1 (PLP1) and papain-like proteinase 2 (PLP2) are responsible for the cleavages located at the N-terminus of the replicase polyprotein. In addition, PLP2 possesses a deubiquitinating/deISGylating activity and processes both 'Lys-48'- and 'Lys-63'-linked polyubiquitin chains from cellular substrates. PLP2 also antagonizes innate immune induction of type I interferon by blocking the nuclear translocation of host IRF-3. Its function is as follows. Responsible for the majority of cleavages as it cleaves the C-terminus of replicase polyprotein at 11 sites. Recognizes substrates containing the core sequence [ILMVF]-Q-|-[SGACN]. Inhibited by the substrate-analog Cbz-Val-Asn-Ser-Thr-Leu-Gln-CMK. Also contains an ADP-ribose-1''-phosphate (ADRP)-binding function. In terms of biological role, nsp7-nsp8 hexadecamer may possibly confer processivity to the polymerase, maybe by binding to dsRNA or by producing primers utilized by the latter. Functionally, nsp9 is a ssRNA-binding protein. This Homo sapiens (Human) protein is Replicase polyprotein 1a.